A 130-amino-acid chain; its full sequence is Phosphoribosyl-AMP cyclohydrolase (130 aa).

Residue D78 participates in Mg(2+) binding. C79 lines the Zn(2+) pocket. Residues D80 and D82 each coordinate Mg(2+). 2 residues coordinate Zn(2+): C96 and C103.

It belongs to the PRA-CH family. Homodimer. The cofactor is Mg(2+). Zn(2+) is required as a cofactor.

Its subcellular location is the cytoplasm. It catalyses the reaction 1-(5-phospho-beta-D-ribosyl)-5'-AMP + H2O = 1-(5-phospho-beta-D-ribosyl)-5-[(5-phospho-beta-D-ribosylamino)methylideneamino]imidazole-4-carboxamide. Its pathway is amino-acid biosynthesis; L-histidine biosynthesis; L-histidine from 5-phospho-alpha-D-ribose 1-diphosphate: step 3/9. Its function is as follows. Catalyzes the hydrolysis of the adenine ring of phosphoribosyl-AMP. The protein is Phosphoribosyl-AMP cyclohydrolase of Nitrosospira multiformis (strain ATCC 25196 / NCIMB 11849 / C 71).